We begin with the raw amino-acid sequence, 655 residues long: MAMAKARKPREALLWALSDLEENDFKKLKFYLRDMTLSEGQPPLARGELEGLIPVDLAELLISKYGEKEAVKVVLKGLKVMNLLELVDQLSHICLHDYREVYREHVRCLEEWQEAGVNGRYNQVLLVAKPSSESPESLACPFPEQELESVTVEALFDSGEKPSLAPSLVVLQGSAGTGKTTLARKMVLDWATGTLYPGRFDYVFYVSCKEVVLLLESKLEQLLFWCCGDNQAPVTEILRQPERLLFILDGFDELQRPFEEKLKKRGLSPKESLLHLLIRRHTLPTCSLLITTRPLALRNLEPLLKQARHVHILGFSEEERARYFSSYFTDEKQADRAFDIVQKNDILYKACQVPGICWVVCSWLQGQMERGKVVLETPRNSTDIFMAYVSTFLPPDDDGGCSELSRHRVLRSLCSLAAEGIQHQRFLFEEAELRKHNLDGPRLAAFLSSNDYQLGLAIKKFYSFRHISFQDFFHAMSYLVKEDQSRLGKESRREVQRLLEVKEQEGNDEMTLTMQFLLDISKKDSFSNLELKFCFRISPCLAQDLKHFKEQMESMKHNRTWDLEFSLYEAKIKNLVKGIQMNNVSFKIKHSNEKKSQSQNLFSVKSSLSHGPKEEQKCPSVHGQKEGKDNIAGTQKEASTGKGRGTEETPKNTYI.

The 96-residue stretch at 1–96 (MAMAKARKPR…VDQLSHICLH (96 aa)) folds into the Pyrin domain. The NACHT domain maps to 167–484 (SLVVLQGSAG…AMSYLVKEDQ (318 aa)). Residue 173–180 (GSAGTGKT) participates in ATP binding. Residues 597–609 (QSQNLFSVKSSLS) are compositionally biased toward polar residues. Residues 597–655 (QSQNLFSVKSSLSHGPKEEQKCPSVHGQKEGKDNIAGTQKEASTGKGRGTEETPKNTYI) are disordered. 2 stretches are compositionally biased toward basic and acidic residues: residues 611 to 629 (GPKE…EGKD) and 644 to 655 (RGTEETPKNTYI).

Belongs to the NLRP family. In terms of assembly, oligomerizes. Interacts with PYCARD. Also interacts with CASP1 and IL1B. Interacts with NOD1 and components of the NOD1 signaling pathway including RIPK2, NR2C2/TAK1 and IKBKG/NEMO. In terms of tissue distribution, highly expressed in basal and suprabasal epidermal cell layers with lower levels in dermal fibroblast cells (at protein level). Widely expressed with highest levels in heart, brain and skeletal muscle. Also expressed in liver, colon, dermis and epidermis. Little expression detected in myeloid cells or peripheral blood mononuclear cells.

It is found in the cytoplasm. Its subcellular location is the cell membrane. Functionally, inhibits autoprocessing of CASP1, CASP1-dependent IL1B secretion, PYCARD aggregation and PYCARD-mediated apoptosis but not apoptosis induced by FAS or BID. Displays anti-inflammatory activity. Required for immunity against C.albicans infection. Involved in the innate immune response by contributing to pro-inflammatory cytokine release in response to invasive bacterial infection. Contributes to T-cell-mediated inflammatory responses in the skin. Plays a role in protection against periodontitis through its involvement in induction of IL1A via ERK activation in oral epithelial cells infected with periodontal pathogens. Exhibits both ATPase and GTPase activities. In Homo sapiens (Human), this protein is NACHT, LRR and PYD domains-containing protein 10 (NLRP10).